A 381-amino-acid polypeptide reads, in one-letter code: Pentatricopeptide repeat-containing protein 2, mitochondrial (381 aa).

One copy of the PPR repeat lies at 157–191; sequence DTTSFNITIDMLFNKQLYESGLEVVGEMKKQGVSL.

It belongs to the PTCD2 family.

Its subcellular location is the mitochondrion. Functionally, involved in mitochondrial RNA maturation and mitochondrial respiratory chain function. The protein is Pentatricopeptide repeat-containing protein 2, mitochondrial (ptcd2) of Danio rerio (Zebrafish).